The primary structure comprises 385 residues: UPF0284 protein PMM0439 (385 aa).

Belongs to the UPF0284 family.

This Prochlorococcus marinus subsp. pastoris (strain CCMP1986 / NIES-2087 / MED4) protein is UPF0284 protein PMM0439.